The following is a 72-amino-acid chain: Small proline-rich protein 2D (72 aa).

The span at 1–11 shows a compositional bias: low complexity; sequence MSYQQQQCKQP. The interval 1 to 20 is disordered; sequence MSYQQQQCKQPCQPPPVCPT. Repeat copies occupy residues 21 to 29, 30 to 38, and 39 to 47. The tract at residues 21–47 is 3 X 9 AA tandem repeats of P-K-C-P-[EQ]-P-C-P-[PS]; that stretch reads PKCPEPCPPPKCPEPCPSPKCPQPCPP. 2 stretches are compositionally biased toward pro residues: residues 33-47 and 56-72; these read PEPCPSPKCPQPCPP and PVTPSPPCQPKCPPKSK. Positions 33–72 are disordered; sequence PEPCPSPKCPQPCPPQQCQQKYPPVTPSPPCQPKCPPKSK.

Belongs to the cornifin (SPRR) family.

It is found in the cytoplasm. In terms of biological role, cross-linked envelope protein of keratinocytes. It is a keratinocyte protein that first appears in the cell cytosol, but ultimately becomes cross-linked to membrane proteins by transglutaminase. All that results in the formation of an insoluble envelope beneath the plasma membrane. The chain is Small proline-rich protein 2D (SPRR2D) from Homo sapiens (Human).